Here is a 205-residue protein sequence, read N- to C-terminus: Pyrrolidone-carboxylate peptidase (205 aa).

Residues E79, C142, and H165 contribute to the active site.

Belongs to the peptidase C15 family. As to quaternary structure, homotetramer.

Its subcellular location is the cytoplasm. It carries out the reaction Release of an N-terminal pyroglutamyl group from a polypeptide, the second amino acid generally not being Pro.. Removes 5-oxoproline from various penultimate amino acid residues except L-proline. The chain is Pyrrolidone-carboxylate peptidase from Gloeobacter violaceus (strain ATCC 29082 / PCC 7421).